A 238-amino-acid polypeptide reads, in one-letter code: Survival of motor neuron-related-splicing factor 30 (238 aa).

Residues 72-132 (SWKVGEKCMA…RPVEEGRKAK (61 aa)) enclose the Tudor domain. The short motif at 142-160 (KKEMIAAQREYKKKKALKK) is the Nuclear localization signal element.

Belongs to the SMN family. In terms of assembly, associates with spliceosomes.

It is found in the nucleus speckle. Its subcellular location is the nucleus. The protein resides in the cajal body. In terms of biological role, involved in spliceosome assembly. This chain is Survival of motor neuron-related-splicing factor 30 (smndc1), found in Xenopus tropicalis (Western clawed frog).